A 158-amino-acid polypeptide reads, in one-letter code: Endoribonuclease YbeY (158 aa).

Zn(2+) contacts are provided by H118, H122, and H128.

This sequence belongs to the endoribonuclease YbeY family. Zn(2+) serves as cofactor.

The protein localises to the cytoplasm. Its function is as follows. Single strand-specific metallo-endoribonuclease involved in late-stage 70S ribosome quality control and in maturation of the 3' terminus of the 16S rRNA. The protein is Endoribonuclease YbeY of Haemophilus ducreyi (strain 35000HP / ATCC 700724).